The sequence spans 232 residues: Ubiquinone biosynthesis O-methyltransferase (232 aa).

Positions 36, 55, 76, and 120 each coordinate S-adenosyl-L-methionine.

The protein belongs to the methyltransferase superfamily. UbiG/COQ3 family.

The enzyme catalyses a 3-demethylubiquinol + S-adenosyl-L-methionine = a ubiquinol + S-adenosyl-L-homocysteine + H(+). The catalysed reaction is a 3-(all-trans-polyprenyl)benzene-1,2-diol + S-adenosyl-L-methionine = a 2-methoxy-6-(all-trans-polyprenyl)phenol + S-adenosyl-L-homocysteine + H(+). It functions in the pathway cofactor biosynthesis; ubiquinone biosynthesis. Functionally, O-methyltransferase that catalyzes the 2 O-methylation steps in the ubiquinone biosynthetic pathway. The polypeptide is Ubiquinone biosynthesis O-methyltransferase (Paraburkholderia phymatum (strain DSM 17167 / CIP 108236 / LMG 21445 / STM815) (Burkholderia phymatum)).